Reading from the N-terminus, the 457-residue chain is MSAGKIIQIIGAVIDVEFPQNAVPKVYDALKVESGLTLEVQQQLGGGVVRCIALGSSDGLKRGLKVENTGNPISVPVGTKTLGRIMNVLGEPIDEKGEIGAEEYWAIHRAAPSYEEQSNSTELLETGIKVIDLICPFAKGGKVGLFGGAGVGKTVNMMELIRNIAIEHSGYSVFAGVGERTREGNDFYHEMTESNVLDKVSLVYGQMNEPPGNRLRVALTGLTMAEKFRDEGRDVLFFVDNIYRYTLAGTEVSALLGRMPSAVGYQPTLAEEMGVLQERITSTKTGSITSVQAVYVPADDLTDPSPATTFAHLDSTVVLSRNIASLGIYPAVDPLDSTSRQLDPLVVGQEHYDVARGVQGILQRYKELKDIIAILGMDELSEDDKLVVARARKIERFLSQPFFVAEVFTGSPGKYVSLKDTIRGFKGILDGEYDHIPEQAFYMVGSIEEVLEKAKKM.

Residue 147-154 (GGAGVGKT) participates in ATP binding.

The protein belongs to the ATPase alpha/beta chains family. As to quaternary structure, F-type ATPases have 2 components, CF(1) - the catalytic core - and CF(0) - the membrane proton channel. CF(1) has five subunits: alpha(3), beta(3), gamma(1), delta(1), epsilon(1). CF(0) has three main subunits: a(1), b(2) and c(9-12). The alpha and beta chains form an alternating ring which encloses part of the gamma chain. CF(1) is attached to CF(0) by a central stalk formed by the gamma and epsilon chains, while a peripheral stalk is formed by the delta and b chains.

Its subcellular location is the cell inner membrane. It carries out the reaction ATP + H2O + 4 H(+)(in) = ADP + phosphate + 5 H(+)(out). Its function is as follows. Produces ATP from ADP in the presence of a proton gradient across the membrane. The catalytic sites are hosted primarily by the beta subunits. The chain is ATP synthase subunit beta from Histophilus somni (strain 2336) (Haemophilus somnus).